A 720-amino-acid polypeptide reads, in one-letter code: Inactive serine protease PAMR1 (720 aa).

A signal peptide spans 1-21 (MELGWWPQLGLAFLQLLLISS). 8 cysteine pairs are disulfide-bonded: Cys128–Cys150, Cys177–Cys199, Cys239–Cys250, Cys244–Cys260, Cys262–Cys271, Cys280–Cys329, Cys315–Cys342, and Cys414–Cys442. The 109-residue stretch at 128–236 (CGQVLRVPKG…DGFHAIFEEI (109 aa)) folds into the CUB domain. The region spanning 235–272 (EITACSSSPCFHDGTCLLDSTGSYKCACLAGYTGKHCE) is the EGF-like domain. Sushi domains follow at residues 278–344 (RNCS…ICIK) and 387–444 (APTK…SCIP). The 276-residue stretch at 445–720 (ICGKTENVSA…FKDWIERNMK (276 aa)) folds into the Peptidase S1 domain. Asn451 carries an N-linked (GlcNAc...) asparagine glycan. Disulfide bonds link Cys489-Cys505, Cys630-Cys649, and Cys661-Cys697.

The protein belongs to the peptidase S1 family.

The protein localises to the secreted. Its function is as follows. May play a role in regeneration of skeletal muscle. The protein is Inactive serine protease PAMR1 (PAMR1) of Bos taurus (Bovine).